Reading from the N-terminus, the 853-residue chain is Leucine-rich repeat and death domain-containing protein 1 (853 aa).

The tract at residues 1–78 (MSEDGSNVEP…EEKNTGIPFS (78 aa)) is disordered. Positions 19–31 (LEEPGSEISDLLD) are enriched in acidic residues. Residues 56–65 (QSAASFTSQL) are compositionally biased toward polar residues. LRR repeat units lie at residues 133–157 (MKSDNFTVNLDAKGLQEFPVDIVKV), 159–180 (YVKYLYLDKNQIKNFQGIDPGD), 183–204 (GLEILSLQENGLSSIPLEIQLF), 206–227 (NLKILNASYNEISQIPKELLQL), 229–251 (NMRQLLLNSNHIDTLPSGLEHLR), 252–274 (YLETLSLGKNMLTYIPDSLSSLK), 275–297 (NLRILNLEYNQLTIFSKSLCFLP), 298–319 (KLNSLNLTGNMIGSLPKEVREL), 321–342 (NLESLLMDHNKLTFLAVEIFQL), 344–365 (KIKELHLADNKLEAISPKIENF), 367–388 (ELRLLNLDKNLLQSIPKKISHC), 390–411 (NLESLSLSDNNIEELPKKIRKL), 413–435 (NLRQLHVNRNKMITMTEEISHLS), 436–457 (NIHILEFSGNQITHVPIEIKNC), 459–481 (KITRVELNYNNIMYFPVGLCALQ), 482–503 (SLDYLSFNGNYISEIPVDMSFS), 505–527 (QLLHLELNRNKLTVFSKHLCSLT), 528–549 (NLEYLDLAKNQIMTIPSCISAM), 551–573 (SLHVLILSDNKFESFPKELCSLK), 574–596 (NLRVLDISENKLQKIPLEISKLK), 597–618 (RIQKLNLSNNIFTNFPVELCQL), 620–641 (TLEELNISQTSGKKLTRLPEEV), 646–668 (QLKILNISNNAIKDIPKNIGELR), 669–690 (SLVSFYASNNQISSLPSSFLSL), 692–713 (VLQSLDLRGNNMTALPSGIYKL), and 715–736 (SLKEINFDDNPLMRPPMEICKG). Positions 757–845 (LEKIFNIVAN…DIMDKITALN (89 aa)) constitute a Death domain.

This Mus musculus (Mouse) protein is Leucine-rich repeat and death domain-containing protein 1 (Lrrd1).